Reading from the N-terminus, the 452-residue chain is Mitochondrial distribution and morphology protein 10 (452 aa).

This sequence belongs to the MDM10 family. Component of the ER-mitochondria encounter structure (ERMES) or MDM complex, composed of MMM1, MDM10, MDM12 and MDM34. Associates with the mitochondrial outer membrane sorting assembly machinery SAM(core) complex.

The protein resides in the mitochondrion outer membrane. Component of the ERMES/MDM complex, which serves as a molecular tether to connect the endoplasmic reticulum and mitochondria. Components of this complex are involved in the control of mitochondrial shape and protein biogenesis and may function in phospholipid exchange. MDM10 is involved in the late assembly steps of the general translocase of the mitochondrial outer membrane (TOM complex). Functions in the TOM40-specific route of the assembly of outer membrane beta-barrel proteins, including the association of TOM40 with the receptor TOM22 and small TOM proteins. Can associate with the SAM(core) complex as well as the MDM12-MMM1 complex, both involved in late steps of the major beta-barrel assembly pathway, that is responsible for biogenesis of all outer membrane beta-barrel proteins. May act as a switch that shuttles between both complexes and channels precursor proteins into the TOM40-specific pathway. Plays a role in mitochondrial morphology and in the inheritance of mitochondria. This chain is Mitochondrial distribution and morphology protein 10, found in Kluyveromyces lactis (strain ATCC 8585 / CBS 2359 / DSM 70799 / NBRC 1267 / NRRL Y-1140 / WM37) (Yeast).